Here is a 587-residue protein sequence, read N- to C-terminus: Chaperonin CPN60, mitochondrial (587 aa).

The transit peptide at 1–32 (MYRLISSIASKARVARNCTSQIGSRLSSTRNY) directs the protein to the mitochondrion.

The protein belongs to the chaperonin (HSP60) family.

The protein localises to the mitochondrion. Functionally, implicated in mitochondrial protein import and macromolecular assembly. May facilitate the correct folding of imported proteins. May also prevent misfolding and promote the refolding and proper assembly of unfolded polypeptides generated under stress conditions in the mitochondrial matrix. In Brassica napus (Rape), this protein is Chaperonin CPN60, mitochondrial.